The chain runs to 69 residues: Protein SlyX homolog (69 aa).

This sequence belongs to the SlyX family.

In Maricaulis maris (strain MCS10) (Caulobacter maris), this protein is Protein SlyX homolog.